The chain runs to 329 residues: DNA-directed RNA polymerase subunit alpha (329 aa).

The interval 1 to 234 (MQGSVTEFLK…EQLDAFVELR (234 aa)) is alpha N-terminal domain (alpha-NTD). Residues 248-329 (FDPILLRPVD…WPPASLADDL (82 aa)) are alpha C-terminal domain (alpha-CTD).

This sequence belongs to the RNA polymerase alpha chain family. As to quaternary structure, homodimer. The RNAP catalytic core consists of 2 alpha, 1 beta, 1 beta' and 1 omega subunit. When a sigma factor is associated with the core the holoenzyme is formed, which can initiate transcription.

The enzyme catalyses RNA(n) + a ribonucleoside 5'-triphosphate = RNA(n+1) + diphosphate. In terms of biological role, DNA-dependent RNA polymerase catalyzes the transcription of DNA into RNA using the four ribonucleoside triphosphates as substrates. The chain is DNA-directed RNA polymerase subunit alpha from Shewanella baltica (strain OS155 / ATCC BAA-1091).